The primary structure comprises 639 residues: 1-deoxy-D-xylulose-5-phosphate synthase (639 aa).

Thiamine diphosphate is bound by residues histidine 79 and 120 to 122; that span reads AHS. Aspartate 151 contacts Mg(2+). Thiamine diphosphate-binding positions include 152–153, asparagine 180, tyrosine 289, and glutamate 371; that span reads GA. Asparagine 180 serves as a coordination point for Mg(2+).

The protein belongs to the transketolase family. DXPS subfamily. Homodimer. Mg(2+) serves as cofactor. The cofactor is thiamine diphosphate.

The catalysed reaction is D-glyceraldehyde 3-phosphate + pyruvate + H(+) = 1-deoxy-D-xylulose 5-phosphate + CO2. The protein operates within metabolic intermediate biosynthesis; 1-deoxy-D-xylulose 5-phosphate biosynthesis; 1-deoxy-D-xylulose 5-phosphate from D-glyceraldehyde 3-phosphate and pyruvate: step 1/1. Functionally, catalyzes the acyloin condensation reaction between C atoms 2 and 3 of pyruvate and glyceraldehyde 3-phosphate to yield 1-deoxy-D-xylulose-5-phosphate (DXP). In Allorhizobium ampelinum (strain ATCC BAA-846 / DSM 112012 / S4) (Agrobacterium vitis (strain S4)), this protein is 1-deoxy-D-xylulose-5-phosphate synthase.